Reading from the N-terminus, the 313-residue chain is Ribosomal RNA small subunit methyltransferase I (313 aa).

Residues 1–23 (MASIQLARTTRGGDGVARADGTR) are disordered.

It belongs to the methyltransferase superfamily. RsmI family.

It is found in the cytoplasm. The catalysed reaction is cytidine(1402) in 16S rRNA + S-adenosyl-L-methionine = 2'-O-methylcytidine(1402) in 16S rRNA + S-adenosyl-L-homocysteine + H(+). In terms of biological role, catalyzes the 2'-O-methylation of the ribose of cytidine 1402 (C1402) in 16S rRNA. The polypeptide is Ribosomal RNA small subunit methyltransferase I (Micromonospora olivasterospora).